We begin with the raw amino-acid sequence, 330 residues long: MSNVVVCALYKFVSLPHFESLREPLLSMMEQADIKGTLLLANEGINGTVAGSQAAIDALLAWLNNQNGLENIVYKLSFDDEMPFYRTKVKLKKEIVTMGVEGIDPLKVVGTYVKPQDWNALISDPEVILVDTRNDYEVQIGTFKNAINPVTETFREFPEYVKQNLDPAKHKKVAMFCTGGIRCEKSTAYLKEQGFEEVYHLEGGILKYLEEVKQEESLWEGECFVFDNRVAVDHDLKKGQYDQCNACRMPITEAEKLSPAYVQGVSCPHCIDKISDEQRKRFVERERQVNLAKSRNEAHIGSDVNQVIEARRQKKEALRQQSAEKNKAKQ.

Positions Ser-123–Ser-217 constitute a Rhodanese domain. Cys-177 acts as the Cysteine persulfide intermediate in catalysis.

Belongs to the TrhO family.

It carries out the reaction uridine(34) in tRNA + AH2 + O2 = 5-hydroxyuridine(34) in tRNA + A + H2O. Its function is as follows. Catalyzes oxygen-dependent 5-hydroxyuridine (ho5U) modification at position 34 in tRNAs. The chain is tRNA uridine(34) hydroxylase from Shewanella sp. (strain ANA-3).